A 91-amino-acid chain; its full sequence is DNA-directed RNA polymerase subunit omega (91 aa).

It belongs to the RNA polymerase subunit omega family. In terms of assembly, the RNAP catalytic core consists of 2 alpha, 1 beta, 1 beta' and 1 omega subunit. When a sigma factor is associated with the core the holoenzyme is formed, which can initiate transcription.

It carries out the reaction RNA(n) + a ribonucleoside 5'-triphosphate = RNA(n+1) + diphosphate. In terms of biological role, promotes RNA polymerase assembly. Latches the N- and C-terminal regions of the beta' subunit thereby facilitating its interaction with the beta and alpha subunits. The polypeptide is DNA-directed RNA polymerase subunit omega (Proteus mirabilis (strain HI4320)).